We begin with the raw amino-acid sequence, 495 residues long: ATP synthase subunit beta, chloroplastic (495 aa).

172-179 (GGAGVGKT) lines the ATP pocket.

This sequence belongs to the ATPase alpha/beta chains family. In terms of assembly, F-type ATPases have 2 components, CF(1) - the catalytic core - and CF(0) - the membrane proton channel. CF(1) has five subunits: alpha(3), beta(3), gamma(1), delta(1), epsilon(1). CF(0) has four main subunits: a(1), b(1), b'(1) and c(9-12).

The protein resides in the plastid. Its subcellular location is the chloroplast thylakoid membrane. It catalyses the reaction ATP + H2O + 4 H(+)(in) = ADP + phosphate + 5 H(+)(out). In terms of biological role, produces ATP from ADP in the presence of a proton gradient across the membrane. The catalytic sites are hosted primarily by the beta subunits. The chain is ATP synthase subunit beta, chloroplastic from Hyacinthus orientalis (Common hyacinth).